Reading from the N-terminus, the 178-residue chain is Acireductone dioxygenase (178 aa).

Residues histidine 82, histidine 84, glutamate 88, and histidine 127 each contribute to the Fe(2+) site. Positions 82, 84, 88, and 127 each coordinate Ni(2+). The residue at position 157 (serine 157) is a Phosphoserine.

It belongs to the acireductone dioxygenase (ARD) family. Fe(2+) serves as cofactor. It depends on Ni(2+) as a cofactor.

Its subcellular location is the cytoplasm. It is found in the nucleus. The enzyme catalyses 1,2-dihydroxy-5-(methylsulfanyl)pent-1-en-3-one + O2 = 4-methylsulfanyl-2-oxobutanoate + formate + 2 H(+). It carries out the reaction 1,2-dihydroxy-5-(methylsulfanyl)pent-1-en-3-one + O2 = 3-(methylsulfanyl)propanoate + CO + formate + 2 H(+). It functions in the pathway amino-acid biosynthesis; L-methionine biosynthesis via salvage pathway; L-methionine from S-methyl-5-thio-alpha-D-ribose 1-phosphate: step 5/6. Catalyzes 2 different reactions between oxygen and the acireductone 1,2-dihydroxy-3-keto-5-methylthiopentene (DHK-MTPene) depending upon the metal bound in the active site. Fe-containing acireductone dioxygenase (Fe-ARD) produces formate and 2-keto-4-methylthiobutyrate (KMTB), the alpha-ketoacid precursor of methionine in the methionine recycle pathway. Ni-containing acireductone dioxygenase (Ni-ARD) produces methylthiopropionate, carbon monoxide and formate, and does not lie on the methionine recycle pathway. The sequence is that of Acireductone dioxygenase (adi1) from Schizosaccharomyces pombe (strain 972 / ATCC 24843) (Fission yeast).